The following is a 184-amino-acid chain: Non-specific lipid transfer protein GPI-anchored 6 (184 aa).

Positions Met-1–Ser-24 are cleaved as a signal peptide. 4 disulfide bridges follow: Cys-33-Cys-74, Cys-43-Cys-58, Cys-59-Cys-101, and Cys-72-Cys-111. Positions Asn-138 to Val-158 are disordered. Ser-160 carries GPI-anchor amidated serine lipidation. Residues Asn-161–Phe-184 constitute a propeptide, removed in mature form.

It belongs to the plant LTP family. In terms of tissue distribution, preferentially expressed in the shoot apical meristem and the root meristem. Also present in the ovules and developing embryos. Observed in cotyledons, hypocotyls, flowers, leaves and siliques. Up-regulated in the epidermis of stems.

Its subcellular location is the cell membrane. Functionally, lipid transfer protein involved in seed and ovule maturation and development, probably by regulating the fatty acids homeostasis during suberin and sporopollenin biosynthesis or deposition. Contributes to pre-invasive defense against some non-host powdery mildew pathogens by preventing the penetration of the epidermal cell wall by the fungal agents (e.g. Blumeria graminis f. sp. hordei (Bgh)). The sequence is that of Non-specific lipid transfer protein GPI-anchored 6 from Arabidopsis thaliana (Mouse-ear cress).